The sequence spans 154 residues: Myoglobin (154 aa).

Residues 2-148 (GLSDGEWQLV…FRNDIAAKYK (147 aa)) form the Globin domain. Ser4 carries the phosphoserine modification. His65 is a binding site for nitrite. O2 is bound at residue His65. Position 68 is a phosphothreonine (Thr68). Heme b is bound at residue His94.

Belongs to the globin family. Monomeric.

The protein localises to the cytoplasm. It is found in the sarcoplasm. The enzyme catalyses Fe(III)-heme b-[protein] + nitric oxide + H2O = Fe(II)-heme b-[protein] + nitrite + 2 H(+). It carries out the reaction H2O2 + AH2 = A + 2 H2O. Monomeric heme protein which primary function is to store oxygen and facilitate its diffusion within muscle tissues. Reversibly binds oxygen through a pentacoordinated heme iron and enables its timely and efficient release as needed during periods of heightened demand. Depending on the oxidative conditions of tissues and cells, and in addition to its ability to bind oxygen, it also has a nitrite reductase activity whereby it regulates the production of bioactive nitric oxide. Under stress conditions, like hypoxia and anoxia, it also protects cells against reactive oxygen species thanks to its pseudoperoxidase activity. The sequence is that of Myoglobin (MB) from Proechimys guairae (Guaira spiny rat).